The chain runs to 406 residues: Argininosuccinate synthase (406 aa).

Residues 14 to 22 (AYSGGLDTS) and Ala-41 each bind ATP. The L-citrulline site is built by Tyr-92 and Ser-97. ATP is bound at residue Gly-122. Residues Thr-124, Asn-128, and Asp-129 each coordinate L-aspartate. Residue Asn-128 coordinates L-citrulline. Residues Arg-132, Ser-181, Ser-190, Glu-266, and Tyr-278 each coordinate L-citrulline.

The protein belongs to the argininosuccinate synthase family. Type 1 subfamily. In terms of assembly, homotetramer.

It localises to the cytoplasm. The enzyme catalyses L-citrulline + L-aspartate + ATP = 2-(N(omega)-L-arginino)succinate + AMP + diphosphate + H(+). The protein operates within amino-acid biosynthesis; L-arginine biosynthesis; L-arginine from L-ornithine and carbamoyl phosphate: step 2/3. The polypeptide is Argininosuccinate synthase (Geobacter sulfurreducens (strain ATCC 51573 / DSM 12127 / PCA)).